The primary structure comprises 268 residues: Ribosomal RNA small subunit methyltransferase A (268 aa).

N10, I12, G37, E58, D83, and N107 together coordinate S-adenosyl-L-methionine.

This sequence belongs to the class I-like SAM-binding methyltransferase superfamily. rRNA adenine N(6)-methyltransferase family. RsmA subfamily.

It localises to the cytoplasm. The catalysed reaction is adenosine(1518)/adenosine(1519) in 16S rRNA + 4 S-adenosyl-L-methionine = N(6)-dimethyladenosine(1518)/N(6)-dimethyladenosine(1519) in 16S rRNA + 4 S-adenosyl-L-homocysteine + 4 H(+). Specifically dimethylates two adjacent adenosines (A1518 and A1519) in the loop of a conserved hairpin near the 3'-end of 16S rRNA in the 30S particle. May play a critical role in biogenesis of 30S subunits. The protein is Ribosomal RNA small subunit methyltransferase A of Caldanaerobacter subterraneus subsp. tengcongensis (strain DSM 15242 / JCM 11007 / NBRC 100824 / MB4) (Thermoanaerobacter tengcongensis).